Reading from the N-terminus, the 274-residue chain is Single-stranded DNA-binding protein WHY1, chloroplastic (274 aa).

The N-terminal 54 residues, Met1–Lys54, are a transit peptide targeting the chloroplast. The segment at Lys100–Leu105 is required for ssDNA binding. The Nuclear localization signal signature appears at Lys178–Lys191. The tract at residues Pro253–Arg274 is disordered.

Belongs to the Whirly family. As to quaternary structure, homotetramer.

It is found in the nucleus. Its subcellular location is the plastid. The protein resides in the chloroplast. Its function is as follows. Single-stranded DNA-binding protein that acts as a transcriptional activator of the pathogenesis-related gene PR-10a. Upon elicitation, binds a 30bp promoter sequence known as elicitor element response (ERE) and is required for PR-10a expression. The chain is Single-stranded DNA-binding protein WHY1, chloroplastic (WHY1) from Solanum tuberosum (Potato).